The primary structure comprises 217 residues: 3,4-dihydroxy-2-butanone 4-phosphate synthase (217 aa).

Residues 37-38 (RE), Asp-42, 150-154 (RQGHT), and Glu-174 contribute to the D-ribulose 5-phosphate site. Glu-38 contacts Mg(2+). His-153 lines the Mg(2+) pocket.

It belongs to the DHBP synthase family. Homodimer. It depends on Mg(2+) as a cofactor. Mn(2+) serves as cofactor.

It carries out the reaction D-ribulose 5-phosphate = (2S)-2-hydroxy-3-oxobutyl phosphate + formate + H(+). It participates in cofactor biosynthesis; riboflavin biosynthesis; 2-hydroxy-3-oxobutyl phosphate from D-ribulose 5-phosphate: step 1/1. Functionally, catalyzes the conversion of D-ribulose 5-phosphate to formate and 3,4-dihydroxy-2-butanone 4-phosphate. This chain is 3,4-dihydroxy-2-butanone 4-phosphate synthase, found in Photorhabdus laumondii subsp. laumondii (strain DSM 15139 / CIP 105565 / TT01) (Photorhabdus luminescens subsp. laumondii).